We begin with the raw amino-acid sequence, 159 residues long: Putative viral CXC chemokine 2 (159 aa).

2 disulfide bridges follow: Cys-50/Cys-77 and Cys-52/Cys-93.

Belongs to the intercrine alpha (chemokine CxC) family.

In Human cytomegalovirus (strain Merlin) (HHV-5), this protein is Putative viral CXC chemokine 2 (UL147).